The sequence spans 331 residues: Ferredoxin--NADP reductase (331 aa).

Residues Thr-20, Glu-39, Gln-47, Tyr-52, Val-92, Phe-126, Asp-287, and Ser-328 each coordinate FAD.

It belongs to the ferredoxin--NADP reductase type 2 family. Homodimer. Requires FAD as cofactor.

The enzyme catalyses 2 reduced [2Fe-2S]-[ferredoxin] + NADP(+) + H(+) = 2 oxidized [2Fe-2S]-[ferredoxin] + NADPH. The polypeptide is Ferredoxin--NADP reductase (Bacillus cereus (strain ZK / E33L)).